The primary structure comprises 78 residues: Sperm-specific protein Phi-0 (78 aa).

3 stretches are compositionally biased toward basic residues: residues 1–21 (MVARRQTKKARKPAARRRSAA), 31–57 (AASRRRPKSAKKAKPAARRRSSVKPKA), and 64–78 (VRRRSRRIRRASVSK). The interval 1-78 (MVARRQTKKA…RRIRRASVSK (78 aa)) is disordered.

It localises to the nucleus. Its subcellular location is the chromosome. Involved in nuclear basic protein transition: histones are replaced by spermatid specific proteins which are themselves replaced by protamines in late spermatids. The chain is Sperm-specific protein Phi-0 from Holothuria tubulosa (Tubular sea cucumber).